Here is a 238-residue protein sequence, read N- to C-terminus: Valine-rich protein (238 aa).

Positions 1–16 (MQAVLLVVALFGAALA) are cleaved as a signal peptide.

Prismatic layer of shell (at protein level). Expressed primarily in the mantle with highest level in the mantle edge and lower level in the mantle pallium.

The protein localises to the secreted. The chain is Valine-rich protein from Margaritifera margaritifera (Freshwater pearl mussel).